The following is an 84-amino-acid chain: uncharacterized protein (84 aa).

This is an uncharacterized protein from Dictyostelium discoideum (Social amoeba).